A 64-amino-acid chain; its full sequence is Large ribosomal subunit protein bL35 (64 aa).

The segment at 1–55 is disordered; that stretch reads MPKMKTNKSVSARFKLTASGQLKRTRPGKRHKLSKKSSQEKRNLSKQPLVDKGQV. The segment covering 23-35 has biased composition (basic residues); sequence KRTRPGKRHKLSK.

The protein belongs to the bacterial ribosomal protein bL35 family.

This chain is Large ribosomal subunit protein bL35, found in Chlamydia pneumoniae (Chlamydophila pneumoniae).